The primary structure comprises 315 residues: MKKVVLIGTGNVGVTVVYTMITKGIDAEYVLIDINTEFAKGHAMDMSDAIALNSTTGSKIRTGTYADAKGADLLIVAAGRPQKQGETRLEMIADNSKIMKDIALEIKKSGFNGFTIVISNPVDILATVFQKVTNFPKEKVMSSGTFLDTSRFRKFLSEKTGVPTNSVHGFVIGEHGDKSVVVFSRMQIGFSRLDDFLKSKALTEDDLKWISEKTYKEAYEIINRKRSTYFGIGASVAEMAESVLYNQRRIFPIGIYLDESKPGGGIYISRPAILGENGWEEVKNYDLSPAEQKAFDESAINLKKHWDDVQKEISF.

NAD(+) contacts are provided by Val12, Asp33, and Tyr65. Substrate-binding positions include Gln82, Arg88, and 120–123 (NPVD). NAD(+) contacts are provided by residues 118-120 (ISN) and Ser143. A substrate-binding site is contributed by 148–151 (DTSR). Beta-D-fructose 1,6-bisphosphate contacts are provided by Arg153 and His168. His175 acts as the Proton acceptor in catalysis. Tyr219 carries the phosphotyrosine modification. Thr228 contacts substrate.

It belongs to the LDH/MDH superfamily. LDH family. In terms of assembly, homotetramer.

The protein localises to the cytoplasm. It carries out the reaction (S)-lactate + NAD(+) = pyruvate + NADH + H(+). It functions in the pathway fermentation; pyruvate fermentation to lactate; (S)-lactate from pyruvate: step 1/1. With respect to regulation, allosterically activated by fructose 1,6-bisphosphate (FBP). In terms of biological role, catalyzes the conversion of lactate to pyruvate. The sequence is that of L-lactate dehydrogenase from Mycoplasmopsis pulmonis (strain UAB CTIP) (Mycoplasma pulmonis).